The chain runs to 470 residues: UDP-N-acetylmuramate--L-alanine ligase (470 aa).

114-120 lines the ATP pocket; sequence GTHGKTT.

This sequence belongs to the MurCDEF family.

Its subcellular location is the cytoplasm. The enzyme catalyses UDP-N-acetyl-alpha-D-muramate + L-alanine + ATP = UDP-N-acetyl-alpha-D-muramoyl-L-alanine + ADP + phosphate + H(+). The protein operates within cell wall biogenesis; peptidoglycan biosynthesis. Cell wall formation. This Xanthobacter autotrophicus (strain ATCC BAA-1158 / Py2) protein is UDP-N-acetylmuramate--L-alanine ligase.